We begin with the raw amino-acid sequence, 229 residues long: Putative N-acetylmannosamine-6-phosphate 2-epimerase (229 aa).

This sequence belongs to the NanE family.

It carries out the reaction an N-acyl-D-glucosamine 6-phosphate = an N-acyl-D-mannosamine 6-phosphate. The protein operates within amino-sugar metabolism; N-acetylneuraminate degradation; D-fructose 6-phosphate from N-acetylneuraminate: step 3/5. Its function is as follows. Converts N-acetylmannosamine-6-phosphate (ManNAc-6-P) to N-acetylglucosamine-6-phosphate (GlcNAc-6-P). In Salmonella arizonae (strain ATCC BAA-731 / CDC346-86 / RSK2980), this protein is Putative N-acetylmannosamine-6-phosphate 2-epimerase.